The following is a 344-amino-acid chain: Endo-1,4-beta-xylanase UM03411 (344 aa).

The signal sequence occupies residues M1–A21. The GH10 domain maps to Q35–T338. The Proton donor role is filled by E166. N171 carries an N-linked (GlcNAc...) asparagine glycan. E275 functions as the Nucleophile in the catalytic mechanism. Residues C293 and C299 are joined by a disulfide bond. Residues N310 and N323 are each glycosylated (N-linked (GlcNAc...) asparagine).

This sequence belongs to the glycosyl hydrolase 10 (cellulase F) family.

It localises to the secreted. It carries out the reaction Endohydrolysis of (1-&gt;4)-beta-D-xylosidic linkages in xylans.. It participates in glycan degradation; xylan degradation. Its function is as follows. Endo-1,4-beta-xylanase involved in the hydrolysis of xylan, a major structural heterogeneous polysaccharide found in plant biomass representing the second most abundant polysaccharide in the biosphere, after cellulose. The chain is Endo-1,4-beta-xylanase UM03411 from Mycosarcoma maydis (Corn smut fungus).